The primary structure comprises 1148 residues: Trafficking protein particle complex subunit 9 (1148 aa).

Ser-566 and Ser-953 each carry phosphoserine.

This sequence belongs to the NIBP family. As to quaternary structure, component of the multisubunit TRAPP (transport protein particle) complex, which includes at least TRAPPC2, TRAPPC2L, TRAPPC3, TRAPPC3L, TRAPPC4, TRAPPC5, TRAPPC8, TRAPPC9, TRAPPC10, TRAPPC11 and TRAPPC12. Directly interacts with IKBKB and MAP3K14. Expressed at high levels in muscle and kidney and to a lower extent in brain, heart and placenta.

It is found in the golgi apparatus. The protein localises to the cis-Golgi network. Its subcellular location is the endoplasmic reticulum. It localises to the cytoplasm. In terms of biological role, functions as an activator of NF-kappa-B through increased phosphorylation of the IKK complex. May function in neuronal cells differentiation. May play a role in vesicular transport from endoplasmic reticulum to Golgi. The polypeptide is Trafficking protein particle complex subunit 9 (TRAPPC9) (Homo sapiens (Human)).